A 740-amino-acid chain; its full sequence is Ion-translocating oxidoreductase complex subunit C (740 aa).

4Fe-4S ferredoxin-type domains lie at glycine 369–tyrosine 397 and lysine 407–phenylalanine 436. Residues cysteine 377, cysteine 380, cysteine 383, cysteine 387, cysteine 416, cysteine 419, cysteine 422, and cysteine 426 each coordinate [4Fe-4S] cluster. The tract at residues lysine 602 to lysine 716 is disordered.

The protein belongs to the 4Fe4S bacterial-type ferredoxin family. RnfC subfamily. In terms of assembly, the complex is composed of six subunits: RsxA, RsxB, RsxC, RsxD, RsxE and RsxG. [4Fe-4S] cluster serves as cofactor.

It localises to the cell inner membrane. In terms of biological role, part of a membrane-bound complex that couples electron transfer with translocation of ions across the membrane. Required to maintain the reduced state of SoxR. The chain is Ion-translocating oxidoreductase complex subunit C from Escherichia coli O139:H28 (strain E24377A / ETEC).